Here is a 594-residue protein sequence, read N- to C-terminus: NADH-ubiquinone oxidoreductase chain 5 (594 aa).

The next 15 helical transmembrane spans lie at 1–21 (MNLF…PIMM), 43–63 (AFLI…EMII), 87–107 (IVFA…SMWY), 114–134 (INQF…LVTA), 137–157 (LFQL…LIGW), 171–191 (AILY…WFLS), 211–233 (LPLM…HPWL), 241–261 (TPVS…FLLI), 272–292 (LMQT…AMCA), 301–320 (IIAF…IGIN), 325–347 (AFLH…GSII), 366–386 (MPFT…VPFL), 409–429 (LLIT…IIFF), 457–477 (LMAG…PMTT), and 486–506 (LKMT…EITL).

It belongs to the complex I subunit 5 family. In terms of assembly, core subunit of respiratory chain NADH dehydrogenase (Complex I) which is composed of 45 different subunits.

The protein localises to the mitochondrion inner membrane. It catalyses the reaction a ubiquinone + NADH + 5 H(+)(in) = a ubiquinol + NAD(+) + 4 H(+)(out). Functionally, core subunit of the mitochondrial membrane respiratory chain NADH dehydrogenase (Complex I) which catalyzes electron transfer from NADH through the respiratory chain, using ubiquinone as an electron acceptor. Essential for the catalytic activity and assembly of complex I. The polypeptide is NADH-ubiquinone oxidoreductase chain 5 (MT-ND5) (Hippopotamus amphibius (Hippopotamus)).